Reading from the N-terminus, the 197-residue chain is CASP-like protein 1B1 (197 aa).

At Ala-2 the chain carries N-acetylalanine. The Cytoplasmic segment spans residues 2–17 (AVSKLTLAATSGKSCK). A helical membrane pass occupies residues 18–38 (ILLGLRLLAFSATLSAAIVMG). Residues 39–69 (LNKETKTFIVGKVGNTPIQATFTAKFDHTPA) lie on the Extracellular side of the membrane. The chain crosses the membrane as a helical span at residues 70–90 (FVFFVVANAMVSFHNLLMIAL). Over 91 to 106 (QIFGGKMEFTGFRLLS) the chain is Cytoplasmic. The chain crosses the membrane as a helical span at residues 107-127 (VAILDMLNVTLISAAANAAAF). Residues 128–156 (MAEVGKNGNKHARWDKICDRFATYCDHGA) are Extracellular-facing. The helical transmembrane segment at 157-177 (GALIAAFAGVILMLIISAASI) threads the bilayer. Topologically, residues 178 to 197 (SRLVQPNKCCSTTASPSVVP) are cytoplasmic.

The protein belongs to the Casparian strip membrane proteins (CASP) family. As to quaternary structure, homodimer and heterodimers.

Its subcellular location is the cell membrane. In Arabidopsis thaliana (Mouse-ear cress), this protein is CASP-like protein 1B1.